The sequence spans 228 residues: 7-cyano-7-deazaguanine synthase (228 aa).

9–19 (LSGGPDSTTVL) contacts ATP. Zn(2+) is bound by residues C193, C203, C206, and C209.

It belongs to the QueC family. It depends on Zn(2+) as a cofactor.

It catalyses the reaction 7-carboxy-7-deazaguanine + NH4(+) + ATP = 7-cyano-7-deazaguanine + ADP + phosphate + H2O + H(+). It participates in purine metabolism; 7-cyano-7-deazaguanine biosynthesis. Catalyzes the ATP-dependent conversion of 7-carboxy-7-deazaguanine (CDG) to 7-cyano-7-deazaguanine (preQ(0)). The protein is 7-cyano-7-deazaguanine synthase of Rickettsia africae (strain ESF-5).